The sequence spans 185 residues: Ribosome-recycling factor (185 aa).

It belongs to the RRF family.

It is found in the cytoplasm. Responsible for the release of ribosomes from messenger RNA at the termination of protein biosynthesis. May increase the efficiency of translation by recycling ribosomes from one round of translation to another. In Buchnera aphidicola subsp. Acyrthosiphon pisum (strain 5A), this protein is Ribosome-recycling factor.